Here is a 370-residue protein sequence, read N- to C-terminus: Cytochrome b (370 aa).

The next 4 helical transmembrane spans lie at 25-45 (FGSM…FLAV), 69-90 (WMMQ…YIHI), 105-125 (WLSG…GYVL), and 170-190 (FFAL…LHIL). Residues histidine 75 and histidine 89 each coordinate heme b. Histidine 174 and histidine 188 together coordinate heme b. Histidine 193 provides a ligand contact to a ubiquinone. Helical transmembrane passes span 218–238 (YKDM…VSFF), 280–300 (LGGA…PFTH), 312–332 (LMQL…WTAT), and 339–358 (FTTI…ISNP).

The protein belongs to the cytochrome b family. As to quaternary structure, the cytochrome bc1 complex contains 3 respiratory subunits (MT-CYB, CYC1 and UQCRFS1), 2 core proteins (UQCRC1 and UQCRC2) and probably 6 low-molecular weight proteins. Requires heme b as cofactor.

It localises to the mitochondrion inner membrane. Its function is as follows. Component of the ubiquinol-cytochrome c reductase complex (complex III or cytochrome b-c1 complex) that is part of the mitochondrial respiratory chain. The b-c1 complex mediates electron transfer from ubiquinol to cytochrome c. Contributes to the generation of a proton gradient across the mitochondrial membrane that is then used for ATP synthesis. The chain is Cytochrome b (MT-CYB) from Chilabothrus striatus (Haitian boa constrictor).